The following is a 386-amino-acid chain: GLABROUS1 enhancer-binding protein-like 1 (386 aa).

2 disordered regions span residues 1 to 58 (MVTP…KKKK) and 197 to 314 (ESGE…DDDD). Residues 216–226 (EEIRDNDETAR) show a composition bias toward basic and acidic residues. The stretch at 221-285 (NDETARKAQQ…LKEHEEVANT (65 aa)) forms a coiled coil. Polar residues predominate over residues 257-267 (DNNGTTQIAQQ). The segment covering 291-300 (NGAAKTTENG) has biased composition (low complexity). The non-canonical leucine-zipper stretch occupies residues 354–375 (LSDEWKALCVEERRLNIKKLRF).

It belongs to the GeBP family. As to quaternary structure, homo- and heterodimers. Interacts with GEBP, GPL2 and GPL3. Interacts with GEBP. Expressed in the apical meristem and young leaf primordia. Detected in the vascular tissues of cotyledons and leaves, in hydathodes and at the base of flowers and siliques, but not in roots.

It is found in the nucleus. Probable transcription factor. May play redundant roles with GEBP and GPL2 in cytokinin responses by regulating the transcript levels of type-A ARR response genes. Involved in stress responses. Plays a repressive role in cell expansion by counteracting the positive role of CPR5 in this process, but does not regulate cell proliferation or endoreduplication. The chain is GLABROUS1 enhancer-binding protein-like 1 from Arabidopsis thaliana (Mouse-ear cress).